A 452-amino-acid chain; its full sequence is Ribosomal L1 domain-containing protein 1 (452 aa).

The residue at position 1 (M1) is an N-acetylmethionine. Residues K119 and K253 each participate in a glycyl lysine isopeptide (Lys-Gly) (interchain with G-Cter in SUMO2) cross-link. The stretch at L277 to A350 forms a coiled coil. The tract at residues Q283–N452 is disordered. Residues N292–M301 are compositionally biased toward basic and acidic residues. Over residues A309–A319 the composition is skewed to polar residues. A compositionally biased stretch (basic residues) spans Q330–Q341. Residues T334, T344, T360, T399, and T407 each carry the phosphothreonine modification. The span at K414–E423 shows a compositional bias: basic and acidic residues. Positions S425–T440 are enriched in polar residues. Phosphothreonine is present on T429. K432 carries the post-translational modification N6-acetyllysine. The residue at position 433 (S433) is a Phosphoserine.

This sequence belongs to the universal ribosomal protein uL1 family. Highly divergent. As to quaternary structure, interacts with ING1. Interacts with KPNA7 and KPNA2.

The protein resides in the nucleus. Its subcellular location is the nucleolus. Its function is as follows. Regulates cellular senescence through inhibition of PTEN translation. Acts as a pro-apoptotic regulator in response to DNA damage. The protein is Ribosomal L1 domain-containing protein 1 of Mus musculus (Mouse).